A 132-amino-acid chain; its full sequence is Small ribosomal subunit protein uS8 (132 aa).

This sequence belongs to the universal ribosomal protein uS8 family. As to quaternary structure, part of the 30S ribosomal subunit. Contacts proteins S5 and S12.

In terms of biological role, one of the primary rRNA binding proteins, it binds directly to 16S rRNA central domain where it helps coordinate assembly of the platform of the 30S subunit. The sequence is that of Small ribosomal subunit protein uS8 from Stenotrophomonas maltophilia (strain K279a).